Here is a 404-residue protein sequence, read N- to C-terminus: MQQLKKVVLAYSGGVDTSVCIPYLKNEYGISEVVTFVADLGQGEDLELVRQKALNSGASKSIVGNLVNSFVERYAFPAIRANALYLDKYPLSTALARPLIAENLVNIAREINADAVAHGCTGKGNDQVRFDLAINALGPDLKIITPAREWNMSREEAILYGEKFGIPAPVSKKSPYSIDVNLLGRSIEAGILEDPMQEAPEDIFSMTSSVNNSPDSHQDIEIVFKNGFPVGINDQFLTPVEIIQRANNLAGKHGFGRIDMIEDRVVGIKSREIYETPGLLLLIKAHKELESITLNPDVIDFKGMVEKKWGQLVYQGFWFGPLKESLDAFISSTQTSVNGRVKIRLYKGNAIVIGRMSENNSLYREDLATYSKDDVFNHSLAEGFIYMWGMSNKIWAELNSKTKD.

ATP is bound by residues 10–18 (AYSGGVDTS) and A38. L-citrulline is bound at residue Y89. G119 is an ATP binding site. L-aspartate contacts are provided by T121, N125, and D126. N125 lines the L-citrulline pocket. Residues R129, S177, S186, E262, and Y274 each coordinate L-citrulline.

The protein belongs to the argininosuccinate synthase family. Type 1 subfamily. In terms of assembly, homotetramer.

Its subcellular location is the cytoplasm. It catalyses the reaction L-citrulline + L-aspartate + ATP = 2-(N(omega)-L-arginino)succinate + AMP + diphosphate + H(+). It participates in amino-acid biosynthesis; L-arginine biosynthesis; L-arginine from L-ornithine and carbamoyl phosphate: step 2/3. This Prochlorococcus marinus (strain AS9601) protein is Argininosuccinate synthase.